Consider the following 325-residue polypeptide: GMP reductase (325 aa).

The active-site Thioimidate intermediate is Cys-174. 203 to 226 contacts NADP(+); it reads IIADGGLRTHGDIAKSIRFGATMV.

The protein belongs to the IMPDH/GMPR family. GuaC type 2 subfamily.

The enzyme catalyses IMP + NH4(+) + NADP(+) = GMP + NADPH + 2 H(+). Its function is as follows. Catalyzes the irreversible NADPH-dependent deamination of GMP to IMP. It functions in the conversion of nucleobase, nucleoside and nucleotide derivatives of G to A nucleotides, and in maintaining the intracellular balance of A and G nucleotides. In Staphylococcus epidermidis (strain ATCC 35984 / DSM 28319 / BCRC 17069 / CCUG 31568 / BM 3577 / RP62A), this protein is GMP reductase.